We begin with the raw amino-acid sequence, 1322 residues long: Flocculation protein FLO9 (1322 aa).

A signal peptide spans 1 to 24 (MSLAHYCLLLAIVTLLGLTNVVSA). A PA14 domain is found at 74 to 249 (GGQTDISIDY…GTTVSDDFEG (176 aa)). Residues Asn-135, Asn-187, Asn-203, Asn-257, Asn-262, and Asn-270 are each glycosylated (N-linked (GlcNAc...) asparagine). A sugar recognition region spans residues 197–240 (NGSPPDNITGTVYMYAGFYYPMKIVYSNAVAWGTLPISVTLPDG). Tandem repeats lie at residues 278–322 (TTTE…STII), 323–367 (TTTE…TTAI), 368–412 (TTTE…TTAM), 413–457 (TTTQ…TTAM), 458–502 (TTTQ…TTAM), 503–547 (TTTQ…TTAM), 548–592 (TTTQ…TTAI), 593–637 (TTTE…TTAI), 638–682 (TTTQ…TTAM), 683–727 (TTTQ…TTAM), 728–772 (TTTQ…GLIS), 773–817 (TTTE…GLVT), and 818–862 (TTTE…ISSS). A 13 X 45 AA approximate tandem repeats, Thr-rich region spans residues 278–862 (TTTEPWTGTF…KTPTTAISSS (585 aa)). An N-linked (GlcNAc...) asparagine glycan is attached at Asn-329. Asn-419, Asn-464, Asn-509, Asn-554, Asn-599, Asn-644, Asn-689, and Asn-734 each carry an N-linked (GlcNAc...) asparagine glycan. Disordered regions lie at residues 770–799 (LIST…NGQP) and 816–843 (VTTT…TNGQ). 2 stretches are compositionally biased toward low complexity: residues 773 to 795 (TTTE…VTGT) and 817 to 840 (TTTT…ITGT). Asn-888 is a glycosylation site (N-linked (GlcNAc...) asparagine). A run of 3 repeats spans residues 892-906 (VISS…TSSL), 907-921 (VISS…TSSP), and 922-936 (VISS…ISST). The segment at 892-936 (VISSSVISSSDTSSLVISSSVTSSLVTSSPVISSSFISSPVISST) is 3 X 15 AA approximate repeats, Ser-rich. The segment covering 950–1001 (SVIPTSSSTSGSSESETGSASSASSSSSISSESPKSTYSSSSLPPVTSATTS) has biased composition (low complexity). The segment at 950–1018 (SVIPTSSSTS…PPVTTTKTSE (69 aa)) is disordered. Residues 1002–1018 (QEITSSLPPVTTTKTSE) are compositionally biased toward polar residues. Repeat copies occupy residues 1013–1063 (TTKT…CPIS), 1085–1135 (TTET…CPIS), and 1136–1186 (TTES…RPQT). Residues 1013-1186 (TTKTSEQTTL…TVYSTWRPQT (174 aa)) are 3 X 51 AA approximate repeats, Thr-rich. Residues 1186-1196 (TTNEQSVSSKM) show a composition bias toward polar residues. Disordered regions lie at residues 1186–1221 (TTNE…AAET) and 1256–1284 (SETG…ASSM). Residues 1197 to 1221 (NSATSETTTNTGAAETTTSTGAAET) are compositionally biased toward low complexity. The span at 1257 to 1284 (ETGNTKSLTSSGLSTMSQQPRSTPASSM) shows a compositional bias: polar residues. Residue Gly-1299 is the site of GPI-anchor amidated glycine attachment. A propeptide spans 1300-1322 (SANSLLAGSGLSVFIASLLLAII) (removed in mature form).

This sequence belongs to the flocculin family. In terms of processing, the GPI-anchor is attached to the protein in the endoplasmic reticulum and serves to target the protein to the cell surface. There, the glucosamine-inositol phospholipid moiety is cleaved off and the GPI-modified mannoprotein is covalently attached via its lipidless GPI glycan remnant to the 1,6-beta-glucan of the outer cell wall layer.

The protein resides in the secreted. It is found in the cell wall. Its subcellular location is the membrane. Functionally, cell wall protein that participates directly in adhesive cell-cell interactions during yeast flocculation, a reversible, asexual and Ca(2+)-dependent process in which cells adhere to form aggregates (flocs) consisting of thousands of cells. The lectin-like protein sticks out of the cell wall of flocculent cells and selectively binds mannose residues in the cell walls of adjacent cells. The protein is Flocculation protein FLO9 (FLO9) of Saccharomyces cerevisiae (strain ATCC 204508 / S288c) (Baker's yeast).